The following is a 446-amino-acid chain: NAD(P)H sulfur oxidoreductase (CoA-dependent) (446 aa).

An FAD-binding site is contributed by 17–18; sequence AA. Arg-28 provides a ligand contact to CoA. FAD is bound by residues 39–40 and 46–48; these read EA and HAP. CoA is bound by residues 45–49, 66–67, and Arg-76; these read SHAPC and HY. The active-site Redox-active is Cys-49. Positions 86, 284, and 302 each coordinate FAD. CoA contacts are provided by Asn-306 and Lys-362. Position 426 (Tyr-426) interacts with FAD. The CoA site is built by Trp-434 and Arg-442.

Belongs to the class-III pyridine nucleotide-disulfide oxidoreductase family. The cofactor is FAD.

The catalysed reaction is hydrogen sulfide + NADP(+) = sulfur + NADPH. It catalyses the reaction hydrogen sulfide + NAD(+) = sulfur + NADH. In terms of biological role, catalyzes the CoA-dependent reduction of elemental sulfur (S(0)) to produce hydrogen sulfide. This chain is NAD(P)H sulfur oxidoreductase (CoA-dependent), found in Pyrococcus abyssi (strain GE5 / Orsay).